The chain runs to 163 residues: Phosphopantetheine adenylyltransferase (163 aa).

T9 contacts substrate. ATP-binding positions include 9–10 (TF) and H17. Substrate-binding residues include K41, T73, and R87. Residues 88-90 (GLR), E98, and 123-129 (FSFISSS) contribute to the ATP site.

This sequence belongs to the bacterial CoaD family. In terms of assembly, homohexamer. Requires Mg(2+) as cofactor.

The protein localises to the cytoplasm. The enzyme catalyses (R)-4'-phosphopantetheine + ATP + H(+) = 3'-dephospho-CoA + diphosphate. The protein operates within cofactor biosynthesis; coenzyme A biosynthesis; CoA from (R)-pantothenate: step 4/5. Functionally, reversibly transfers an adenylyl group from ATP to 4'-phosphopantetheine, yielding dephospho-CoA (dPCoA) and pyrophosphate. The polypeptide is Phosphopantetheine adenylyltransferase (Desulfitobacterium hafniense (strain Y51)).